The primary structure comprises 554 residues: Formate--tetrahydrofolate ligase (554 aa).

Position 65-72 (threonine 65–threonine 72) interacts with ATP.

It belongs to the formate--tetrahydrofolate ligase family.

The enzyme catalyses (6S)-5,6,7,8-tetrahydrofolate + formate + ATP = (6R)-10-formyltetrahydrofolate + ADP + phosphate. It participates in one-carbon metabolism; tetrahydrofolate interconversion. This chain is Formate--tetrahydrofolate ligase, found in Aliivibrio salmonicida (strain LFI1238) (Vibrio salmonicida (strain LFI1238)).